Reading from the N-terminus, the 81-residue chain is Saposin-C (81 aa).

In terms of domain architecture, Saposin B-type spans 1–81; sequence ESVTCKACEY…CSELGLCMSG (81 aa). Cystine bridges form between cysteine 5–cysteine 78, cysteine 8–cysteine 72, and cysteine 36–cysteine 47. Asparagine 22 carries an N-linked (GlcNAc...) asparagine glycan.

Its function is as follows. Saposin-A and saposin-C stimulate the hydrolysis of glucosylceramide by beta-glucosylceramidase (EC 3.2.1.45) and galactosylceramide by beta-galactosylceramidase (EC 3.2.1.46). Saposin-C apparently acts by combining with the enzyme and acidic lipid to form an activated complex, rather than by solubilizing the substrate. This chain is Saposin-C (PSAP), found in Cavia porcellus (Guinea pig).